The sequence spans 187 residues: MKVIVGLGNPGPRYAFNRHNVGFMFVDRFKEFKKCSTWQHRDRYTFSQCKDIFLVKPNTFMNLSGIAVIKCQRDFHVTTTDIIVVYDDVDLPCGRLRIKAQGGSGGHRGLQSIIDYIGTNEFVRLRIGIGPKPENIDLADYVLEDFTEEELRLIDKVLDKAVEAVDVMLNEGLSKAMSVFNSYEVVL.

Tyrosine 14 is a binding site for tRNA. The active-site Proton acceptor is histidine 19. Positions 60 and 62 each coordinate tRNA.

The protein belongs to the PTH family. Monomer.

The protein resides in the cytoplasm. The enzyme catalyses an N-acyl-L-alpha-aminoacyl-tRNA + H2O = an N-acyl-L-amino acid + a tRNA + H(+). Functionally, hydrolyzes ribosome-free peptidyl-tRNAs (with 1 or more amino acids incorporated), which drop off the ribosome during protein synthesis, or as a result of ribosome stalling. Catalyzes the release of premature peptidyl moieties from peptidyl-tRNA molecules trapped in stalled 50S ribosomal subunits, and thus maintains levels of free tRNAs and 50S ribosomes. The protein is Peptidyl-tRNA hydrolase of Pseudothermotoga lettingae (strain ATCC BAA-301 / DSM 14385 / NBRC 107922 / TMO) (Thermotoga lettingae).